The primary structure comprises 157 residues: SsrA-binding protein (157 aa).

The disordered stretch occupies residues 132–157 (EHDKRDTIKEREGKREVERAMKSRHR).

It belongs to the SmpB family.

It localises to the cytoplasm. Its function is as follows. Required for rescue of stalled ribosomes mediated by trans-translation. Binds to transfer-messenger RNA (tmRNA), required for stable association of tmRNA with ribosomes. tmRNA and SmpB together mimic tRNA shape, replacing the anticodon stem-loop with SmpB. tmRNA is encoded by the ssrA gene; the 2 termini fold to resemble tRNA(Ala) and it encodes a 'tag peptide', a short internal open reading frame. During trans-translation Ala-aminoacylated tmRNA acts like a tRNA, entering the A-site of stalled ribosomes, displacing the stalled mRNA. The ribosome then switches to translate the ORF on the tmRNA; the nascent peptide is terminated with the 'tag peptide' encoded by the tmRNA and targeted for degradation. The ribosome is freed to recommence translation, which seems to be the essential function of trans-translation. The protein is SsrA-binding protein of Paracidovorax citrulli (strain AAC00-1) (Acidovorax citrulli).